The primary structure comprises 160 residues: Probable small nuclear ribonucleoprotein-associated protein B (160 aa).

Residues 4–86 (SKNNKMMAHL…IVSMTVDGPP (83 aa)) form the Sm domain. Positions 80–160 (MTVDGPPPRD…YGGPPGGRPF (81 aa)) are disordered. Gly residues-rich tracts occupy residues 99 to 113 (GGAG…GGRG), 128 to 143 (APGG…GGPG), and 150 to 160 (GYGGPPGGRPF).

It belongs to the snRNP SmB/SmN family.

It localises to the nucleus. Its subcellular location is the cytoplasm. The protein resides in the cytosol. Functionally, plays a role in pre-mRNA splicing as a core component of the spliceosomal U1, U2, U4 and U5 small nuclear ribonucleoproteins (snRNPs), the building blocks of the spliceosome. The polypeptide is Probable small nuclear ribonucleoprotein-associated protein B (snr-2) (Caenorhabditis elegans).